A 512-amino-acid chain; its full sequence is MMYASLVHWLALAVALAVPFVTALGSVPYPQDDPFYYPSENGWQNEAPGTILRQRKIQAASLGIFEWKLDAWQVLYRTAGARPDKPSYTVTTFLVPSHAHRDRVVTISSPENSNFIQCAPSYAFRKTGVLEIANFEPRWEQMLYTLFLAEGWIVNAPDHEGPESAFSAGRFGGHMVLDSMRAANNFKPLQLSSNPMHIGHGYSGGSTPNGWAASLHESYANELNVVGWSLGGSMTDPLYTLNSLDGKPTSSLVVAGAIGLMDAYRDEVGNLLDDEVWTEEGKIAEKVMRNSCVYESVIRYFGTTFQSERYIKGGRNLSSWPQMRKISNMNTMGHNPRFTPRKPIFMFHALYDEEINWHQANKTAVEWCNNGANVRFLTYSSTSLVHVTTYLLNLPYIVQYMRDRFNGKDWYGGGCQFDVESQNPALDVNVLGERFRGILEAALDMLGKEIGPNDSILKNRLKAGQNPNTHHKTKLHVLKKGDISPGEGGDHTKESKKAAAKFKAEKKHGKHH.

The first 17 residues, 1–17 (MMYASLVHWLALAVALA), serve as a signal peptide directing secretion. Cysteine 118 and cysteine 292 are oxidised to a cystine. Serine 203 (nucleophile) is an active-site residue. A glycan (N-linked (GlcNAc...) asparagine) is linked at asparagine 316. Residue aspartate 352 is part of the active site. Asparagine 361 carries N-linked (GlcNAc...) asparagine glycosylation. Histidine 386 is a catalytic residue. Asparagine 453 is a glycosylation site (N-linked (GlcNAc...) asparagine). The tract at residues 480–512 (KGDISPGEGGDHTKESKKAAAKFKAEKKHGKHH) is disordered. The segment covering 488-497 (GGDHTKESKK) has biased composition (basic and acidic residues). Residues 498–512 (AAAKFKAEKKHGKHH) show a composition bias toward basic residues.

This sequence belongs to the AB hydrolase superfamily. Lipase family. Class Lip subfamily.

The protein localises to the secreted. The catalysed reaction is a triacylglycerol + H2O = a diacylglycerol + a fatty acid + H(+). The enzyme catalyses a monoacylglycerol + H2O = glycerol + a fatty acid + H(+). It carries out the reaction a diacylglycerol + H2O = a monoacylglycerol + a fatty acid + H(+). Its function is as follows. Secreted lipase that hydrolyzes acylglycerol lipids such as triacylglycerols and consequently releases free fatty acid. Can hydrolyze 4-nitrophenyl palmitate to release 4-nitrophenol and palmitoic acid. Due to an absence of fatty acid synthase genes in Malassezia species, secretory lipases are essential for the yeast to generate free fatty acids from degradation of sebum and assimilate them as lipid sources for growth. Plays an essential role at the pathogen-host interface during disease progression. This is Secreted triacylglycerol lipase LIP5 from Malassezia restricta (strain ATCC 96810 / NBRC 103918 / CBS 7877) (Seborrheic dermatitis infection agent).